Reading from the N-terminus, the 1958-residue chain is Rho GTPase-activating protein 21 (1958 aa).

Residues 1-42 form a disordered region; sequence MMATRRTGLSEGDGDKLKACEVSKNKDGKEQSETVSLSEDET. Residues 13 to 32 are compositionally biased toward basic and acidic residues; it reads DGDKLKACEVSKNKDGKEQS. Phosphoserine is present on residues Ser-36 and Ser-57. In terms of domain architecture, PDZ spans 50–159; it reads TVTLKRTSQG…TLELSVMPKD (110 aa). Polar residues-rich tracts occupy residues 286 to 295, 306 to 325, and 418 to 436; these read SNRNNHTGPS, SEQTSLKTVSRTTSPPLSIP, and ASQSTTDYNQVVPNRTTLQ. Disordered stretches follow at residues 286 to 325 and 418 to 458; these read SNRNNHTGPSHRTEEVRYGVSEQTSLKTVSRTTSPPLSIP and ASQS…QRSV. Over residues 448 to 458 the composition is skewed to low complexity; it reads PQSVQIRQRSV. Ser-459 is modified (phosphoserine). Arg-554 and Arg-575 each carry omega-N-methylarginine. Phosphoserine occurs at positions 612, 616, and 625. The segment covering 659 to 687 has biased composition (polar residues); that stretch reads SLLNQQTWVRTDSAPDQQVETGKSPSLSG. Residues 659–751 form a disordered region; that stretch reads SLLNQQTWVR…PSGRQTPQPL (93 aa). At Ser-717 the chain carries Phosphoserine. A compositionally biased stretch (basic and acidic residues) spans 729-742; it reads LDNKEAVILREKPP. The residue at position 747 (Thr-747) is a Phosphothreonine. Phosphoserine occurs at positions 857, 862, and 881. Residues 859–885 are disordered; that stretch reads DHESVGPPSLDAQPNSKTERSKSYDEG. A compositionally biased stretch (basic and acidic residues) spans 875–885; the sequence is KTERSKSYDEG. A Phosphotyrosine modification is found at Tyr-882. Phosphoserine is present on residues Ser-924, Ser-926, Ser-954, Ser-1099, and Ser-1115. The segment at 930–1097 is interaction with ARF1 and ARF6; it reads SDAAKEGWLH…AKSEPKTQSP (168 aa). In terms of domain architecture, PH spans 931–1040; sequence DAAKEGWLHF…WIKTIQESSN (110 aa). Residues 1086–1133 form a disordered region; the sequence is LGAKSEPKTQSPHSPKEESERKLLSKDDTSPPKDKGTWRKGIPSIMRK. Basic and acidic residues predominate over residues 1099–1122; the sequence is SPKEESERKLLSKDDTSPPKDKGT. Positions 1147–1339 constitute a Rho-GAP domain; sequence VRLDDCPPAH…TLIQHHDWFF (193 aa). Disordered regions lie at residues 1348–1401, 1418–1575, 1598–1642, and 1655–1686; these read LTTV…GSGK, SRKR…KHSE, SLDS…SEFP, and RGKLQEVTKSSRRNSEGSELSCTEGSLTSSLD. The segment covering 1349–1362 has biased composition (polar residues); the sequence is TTVQEESTVDSQPV. A compositionally biased stretch (low complexity) spans 1383-1401; sequence SDSATSDSTKSKGSWGSGK. A phosphoserine mark is found at Ser-1418, Ser-1432, and Ser-1433. Basic and acidic residues-rich tracts occupy residues 1441–1466 and 1477–1493; these read FFKKENVEQCHNDTKEESKKESETLG and NSTRKDPSTTKDEKISL. Lys-1444 is covalently cross-linked (Glycyl lysine isopeptide (Lys-Gly) (interchain with G-Cter in SUMO)). Ser-1504 is subject to Phosphoserine. At Thr-1516 the chain carries Phosphothreonine. The residue at position 1527 (Ser-1527) is a Phosphoserine. The segment covering 1544–1559 has biased composition (low complexity); sequence SDSGTLLSTSSQASLA. An interaction with CTNNA1 region spans residues 1592–1861; that stretch reads SATYLTSLDS…WLARERLRTS (270 aa). The segment covering 1603–1612 has biased composition (polar residues); sequence RLSPEVQSVA. The segment covering 1624–1634 has biased composition (basic and acidic residues); that stretch reads SELISEGRPVE. Position 1669 is a phosphoserine (Ser-1669). The segment covering 1671–1686 has biased composition (polar residues); sequence GSELSCTEGSLTSSLD. Thr-1682 carries the phosphothreonine modification. Ser-1742 carries the phosphoserine modification. The interval 1860–1958 is disordered; the sequence is TSTSDLSRGE…GSKAEFHPCL (99 aa). Over residues 1874–1909 the composition is skewed to polar residues; the sequence is QTENPSTREIATTDTPLSLHCNTGSSSSTLASTNRP. Ser-1917 bears the Phosphoserine mark. Residues 1918-1931 show a composition bias toward polar residues; the sequence is PDQINGESFQNVSK.

As to quaternary structure, interacts with GTP-bound ARF1 and ARF6. Interacts with CTNNA1. Post-translationally, sumoylated with SUMO2 and SUMO3 in proliferating lymphocytes. As to expression, widely expressed with higher expression in brain, heart, skeletal muscle and placenta.

It is found in the golgi apparatus membrane. It localises to the cell junction. The protein resides in the cytoplasmic vesicle membrane. The protein localises to the cytoplasm. Its subcellular location is the cytoskeleton. In terms of biological role, functions as a GTPase-activating protein (GAP) for RHOA and CDC42. Downstream partner of ARF1 which may control Golgi apparatus structure and function. Also required for CTNNA1 recruitment to adherens junctions. The protein is Rho GTPase-activating protein 21 (ARHGAP21) of Homo sapiens (Human).